The primary structure comprises 271 residues: ATP synthase subunit a (271 aa).

Helical transmembrane passes span 38–58 (FWTL…LFLV), 100–120 (LIAP…LMDL), 146–166 (DVNI…FYSI), 220–240 (LIFI…LNVP), and 242–262 (AIFH…LTIV).

The protein belongs to the ATPase A chain family. In terms of assembly, F-type ATPases have 2 components, CF(1) - the catalytic core - and CF(0) - the membrane proton channel. CF(1) has five subunits: alpha(3), beta(3), gamma(1), delta(1), epsilon(1). CF(0) has three main subunits: a(1), b(2) and c(9-12). The alpha and beta chains form an alternating ring which encloses part of the gamma chain. CF(1) is attached to CF(0) by a central stalk formed by the gamma and epsilon chains, while a peripheral stalk is formed by the delta and b chains.

Its subcellular location is the cell inner membrane. Key component of the proton channel; it plays a direct role in the translocation of protons across the membrane. This chain is ATP synthase subunit a, found in Salmonella arizonae (strain ATCC BAA-731 / CDC346-86 / RSK2980).